The primary structure comprises 529 residues: Bifunctional purine biosynthesis protein PurH (529 aa).

Residues 1-148 (MQQRRPVRRA…KNHKDVAIVV (148 aa)) form the MGS-like domain. Lys287 carries the post-translational modification N6-acetyllysine.

Belongs to the PurH family.

The catalysed reaction is (6R)-10-formyltetrahydrofolate + 5-amino-1-(5-phospho-beta-D-ribosyl)imidazole-4-carboxamide = 5-formamido-1-(5-phospho-D-ribosyl)imidazole-4-carboxamide + (6S)-5,6,7,8-tetrahydrofolate. It catalyses the reaction IMP + H2O = 5-formamido-1-(5-phospho-D-ribosyl)imidazole-4-carboxamide. Its pathway is purine metabolism; IMP biosynthesis via de novo pathway; 5-formamido-1-(5-phospho-D-ribosyl)imidazole-4-carboxamide from 5-amino-1-(5-phospho-D-ribosyl)imidazole-4-carboxamide (10-formyl THF route): step 1/1. The protein operates within purine metabolism; IMP biosynthesis via de novo pathway; IMP from 5-formamido-1-(5-phospho-D-ribosyl)imidazole-4-carboxamide: step 1/1. This Escherichia coli O7:K1 (strain IAI39 / ExPEC) protein is Bifunctional purine biosynthesis protein PurH.